The primary structure comprises 350 residues: Nuclear pore complex-interacting protein family member A3 (350 aa).

The interval lysine 306 to aspartate 325 is disordered.

The protein belongs to the NPIP family.

This Homo sapiens (Human) protein is Nuclear pore complex-interacting protein family member A3 (NPIPA3).